The chain runs to 437 residues: UDP-N-acetylmuramoylalanine--D-glutamate ligase (437 aa).

115–121 (GSNGKST) is an ATP binding site.

The protein belongs to the MurCDEF family.

Its subcellular location is the cytoplasm. The enzyme catalyses UDP-N-acetyl-alpha-D-muramoyl-L-alanine + D-glutamate + ATP = UDP-N-acetyl-alpha-D-muramoyl-L-alanyl-D-glutamate + ADP + phosphate + H(+). Its pathway is cell wall biogenesis; peptidoglycan biosynthesis. In terms of biological role, cell wall formation. Catalyzes the addition of glutamate to the nucleotide precursor UDP-N-acetylmuramoyl-L-alanine (UMA). The protein is UDP-N-acetylmuramoylalanine--D-glutamate ligase of Vibrio parahaemolyticus serotype O3:K6 (strain RIMD 2210633).